Here is a 246-residue protein sequence, read N- to C-terminus: Uridylate kinase (246 aa).

11-14 (KISG) lines the ATP pocket. Glycine 53 lines the UMP pocket. Glycine 54 and arginine 58 together coordinate ATP. UMP-binding positions include aspartate 74 and 135-142 (TGSPYLTT). The ATP site is built by threonine 162, tyrosine 169, and aspartate 172.

It belongs to the UMP kinase family. Homohexamer.

Its subcellular location is the cytoplasm. The enzyme catalyses UMP + ATP = UDP + ADP. It participates in pyrimidine metabolism; CTP biosynthesis via de novo pathway; UDP from UMP (UMPK route): step 1/1. Its activity is regulated as follows. Inhibited by UTP. In terms of biological role, catalyzes the reversible phosphorylation of UMP to UDP. The protein is Uridylate kinase of Chlamydia abortus (strain DSM 27085 / S26/3) (Chlamydophila abortus).